The following is a 300-amino-acid chain: Spermatogenesis-associated serine-rich protein 1 (300 aa).

Over residues 1–10 the composition is skewed to polar residues; it reads MSPSMLTGNS. 2 disordered regions span residues 1–42 and 64–91; these read MSPS…MTEV and TPSG…LPRV. Positions 27 to 42 are enriched in basic and acidic residues; the sequence is QLEKVPEKRDSGMTEV. Residues 64–85 show a composition bias toward low complexity; the sequence is TPSGKSVSSSSSVETGPSVSEP. Residue S113 is modified to Phosphoserine.

The chain is Spermatogenesis-associated serine-rich protein 1 (SPATS1) from Homo sapiens (Human).